The primary structure comprises 388 residues: Leucine aminopeptidase 1 (388 aa).

The N-terminal stretch at 1–19 (MKVLTAIALSAIAFTGAVA) is a signal peptide. The propeptide occupies 20-88 (AVITQEAFLN…YPTLHSASYV (69 aa)). N-linked (GlcNAc...) asparagine glycosylation is found at Asn-106 and Asn-180. Residues His-188 and Asp-207 each coordinate Zn(2+). A glycan (N-linked (GlcNAc...) asparagine) is linked at Asn-232. The Zn(2+) site is built by Glu-246 and Asp-273. A disulfide bond links Cys-322 and Cys-326. Residue His-355 coordinates Zn(2+).

Belongs to the peptidase M28 family. M28E subfamily. As to quaternary structure, monomer. Requires Zn(2+) as cofactor.

The protein resides in the secreted. Functionally, extracellular aminopeptidase that allows assimilation of proteinaceous substrates and which contributes to pathogenicity. The sequence is that of Leucine aminopeptidase 1 (lap1) from Aspergillus fumigatus (strain CBS 144.89 / FGSC A1163 / CEA10) (Neosartorya fumigata).